Here is a 261-residue protein sequence, read N- to C-terminus: MNRIDGREFNELRPIKITRNFNKFAEGSVLIEMGNTKVICTASIEDKVPPFQKGTGKGWITSEYGMLPRATETRNPREVTKGRPSGRTMEIQRLIGRSLRSVVDLDVLGEKTIWIDCDVIQADGGTRTASITGSFIALADALNKLVEKGDIPKIPLKGFVAAVSVGIVEGNELLDLSFQEDSNALVDMNVVMTDKGEIVEIQGTGEGGPFTKQNLTDLLSLAEYGIEQIIKIQKEVLSDIVDKIGVDSVENNNSNPQSSQN.

Phosphate contacts are provided by residues Arg-87 and 125–127 (GTR).

Belongs to the RNase PH family. As to quaternary structure, homohexameric ring arranged as a trimer of dimers.

It carries out the reaction tRNA(n+1) + phosphate = tRNA(n) + a ribonucleoside 5'-diphosphate. Phosphorolytic 3'-5' exoribonuclease that plays an important role in tRNA 3'-end maturation. Removes nucleotide residues following the 3'-CCA terminus of tRNAs; can also add nucleotides to the ends of RNA molecules by using nucleoside diphosphates as substrates, but this may not be physiologically important. Probably plays a role in initiation of 16S rRNA degradation (leading to ribosome degradation) during starvation. The chain is Ribonuclease PH from Thermoanaerobacter pseudethanolicus (strain ATCC 33223 / 39E) (Clostridium thermohydrosulfuricum).